The primary structure comprises 572 residues: Urease subunit alpha (572 aa).

Positions 133 to 572 constitute a Urease domain; the sequence is GGIDLHVHYI…TSLSQRYFLF (440 aa). Residues H138, H140, and K221 each coordinate Ni(2+). K221 carries the post-translational modification N6-carboxylysine. H223 contacts substrate. Positions 250 and 276 each coordinate Ni(2+). H324 serves as the catalytic Proton donor. A Ni(2+)-binding site is contributed by D364.

It belongs to the metallo-dependent hydrolases superfamily. Urease alpha subunit family. In terms of assembly, heterotrimer of UreA (gamma), UreB (beta) and UreC (alpha) subunits. Three heterotrimers associate to form the active enzyme. It depends on Ni cation as a cofactor. Post-translationally, carboxylation allows a single lysine to coordinate two nickel ions.

The protein resides in the cytoplasm. It catalyses the reaction urea + 2 H2O + H(+) = hydrogencarbonate + 2 NH4(+). It functions in the pathway nitrogen metabolism; urea degradation; CO(2) and NH(3) from urea (urease route): step 1/1. Ureolysis may allow urea to be employed as a nitrogen source for growth and produces ammonia which may protect from killing at low pH. In Streptococcus salivarius (strain 57.I), this protein is Urease subunit alpha.